A 459-amino-acid polypeptide reads, in one-letter code: Glutamyl-tRNA reductase (459 aa).

Substrate contacts are provided by residues 49-52 (TCNR), Ser109, 114-116 (ETQ), and Gln120. Cys50 serves as the catalytic Nucleophile. An NADP(+)-binding site is contributed by 189 to 194 (GAGKMG).

The protein belongs to the glutamyl-tRNA reductase family. As to quaternary structure, homodimer.

The catalysed reaction is (S)-4-amino-5-oxopentanoate + tRNA(Glu) + NADP(+) = L-glutamyl-tRNA(Glu) + NADPH + H(+). The protein operates within porphyrin-containing compound metabolism; protoporphyrin-IX biosynthesis; 5-aminolevulinate from L-glutamyl-tRNA(Glu): step 1/2. Functionally, catalyzes the NADPH-dependent reduction of glutamyl-tRNA(Glu) to glutamate 1-semialdehyde (GSA). The sequence is that of Glutamyl-tRNA reductase from Halalkalibacterium halodurans (strain ATCC BAA-125 / DSM 18197 / FERM 7344 / JCM 9153 / C-125) (Bacillus halodurans).